A 180-amino-acid polypeptide reads, in one-letter code: uncharacterized protein (180 aa).

An N-acetyltransferase domain is found at 45–180 (FVFSQVRTLD…GNRCAFWYAN (136 aa)).

It belongs to the acetyltransferase family. Ycf52 subfamily.

This is an uncharacterized protein from Prochlorococcus marinus (strain SARG / CCMP1375 / SS120).